We begin with the raw amino-acid sequence, 207 residues long: Small ribosomal subunit protein uS4 (207 aa).

The disordered stretch occupies residues Cys-32–Gln-55. Polar residues predominate over residues Gly-42–Gly-53. The 62-residue stretch at Ser-97–Glu-158 folds into the S4 RNA-binding domain.

This sequence belongs to the universal ribosomal protein uS4 family. In terms of assembly, part of the 30S ribosomal subunit. Contacts protein S5. The interaction surface between S4 and S5 is involved in control of translational fidelity.

Its function is as follows. One of the primary rRNA binding proteins, it binds directly to 16S rRNA where it nucleates assembly of the body of the 30S subunit. Functionally, with S5 and S12 plays an important role in translational accuracy. The sequence is that of Small ribosomal subunit protein uS4 from Paraburkholderia phytofirmans (strain DSM 17436 / LMG 22146 / PsJN) (Burkholderia phytofirmans).